Here is a 418-residue protein sequence, read N- to C-terminus: UDP-N-acetylglucosamine 1-carboxyvinyltransferase (418 aa).

22–23 contacts phosphoenolpyruvate; that stretch reads KN. Arg92 provides a ligand contact to UDP-N-acetyl-alpha-D-glucosamine. Cys116 functions as the Proton donor in the catalytic mechanism. Cys116 carries the 2-(S-cysteinyl)pyruvic acid O-phosphothioketal modification. UDP-N-acetyl-alpha-D-glucosamine-binding residues include Asp306 and Ile328.

Belongs to the EPSP synthase family. MurA subfamily.

It is found in the cytoplasm. The catalysed reaction is phosphoenolpyruvate + UDP-N-acetyl-alpha-D-glucosamine = UDP-N-acetyl-3-O-(1-carboxyvinyl)-alpha-D-glucosamine + phosphate. The protein operates within cell wall biogenesis; peptidoglycan biosynthesis. Its function is as follows. Cell wall formation. Adds enolpyruvyl to UDP-N-acetylglucosamine. The chain is UDP-N-acetylglucosamine 1-carboxyvinyltransferase from Solibacter usitatus (strain Ellin6076).